We begin with the raw amino-acid sequence, 181 residues long: I-Kappa-B like protein C2 (181 aa).

3 ANK repeats span residues aspartate 54–serine 86, aspartate 91–isoleucine 121, and alanine 125–valine 154.

This sequence belongs to the polydnaviridae I-Kappa-B-like protein family.

Functionally, suppresses the host immune response through NF-kappa-B inactivation. Possesses ankyrin repeat domains required for NF-kappa-B binding but lacks the regulatory regions required for dissociation from NF-kappa-B and degradation. Therefore, prevents host NF-kappa-B release and subsequent activation. The polypeptide is I-Kappa-B like protein C2 (C2) (Microplitis demolitor (Parasitoid wasp)).